Consider the following 349-residue polypeptide: Peroxidase C3 (349 aa).

The N-terminal stretch at Met1–Ala29 is a signal peptide. 4 disulfide bridges follow: Cys40–Cys120, Cys73–Cys78, Cys126–Cys329, and Cys206–Cys238. His71 (proton acceptor) is an active-site residue. Asp72, Val75, Gly77, Asp79, and Ser81 together coordinate Ca(2+). Asn86 carries an N-linked (GlcNAc...) asparagine glycan. Pro168 provides a ligand contact to substrate. His199 contributes to the heme b binding site. Thr200 is a Ca(2+) binding site. N-linked (GlcNAc...) asparagine glycans are attached at residues Asn217 and Asn243. Residues Asp251, Thr254, and Asp259 each coordinate Ca(2+).

Belongs to the peroxidase family. Classical plant (class III) peroxidase subfamily. The cofactor is Ca(2+). Heme b is required as a cofactor.

It is found in the secreted. The protein localises to the vacuole. It carries out the reaction 2 a phenolic donor + H2O2 = 2 a phenolic radical donor + 2 H2O. In terms of biological role, removal of H(2)O(2), oxidation of toxic reductants, biosynthesis and degradation of lignin, suberization, auxin catabolism, response to environmental stresses such as wounding, pathogen attack and oxidative stress. These functions might be dependent on each isozyme/isoform in each plant tissue. The sequence is that of Peroxidase C3 (PRXC3) from Armoracia rusticana (Horseradish).